Reading from the N-terminus, the 159-residue chain is Transcriptional repressor NrdR (159 aa).

The segment at Cys3 to Cys34 is a zinc-finger region. The 91-residue stretch at Pro49–Asp139 folds into the ATP-cone domain.

Belongs to the NrdR family. Zn(2+) is required as a cofactor.

Negatively regulates transcription of bacterial ribonucleotide reductase nrd genes and operons by binding to NrdR-boxes. This chain is Transcriptional repressor NrdR, found in Syntrophus aciditrophicus (strain SB).